The sequence spans 543 residues: Putative inorganic phosphate export protein YjbB (543 aa).

9 helical membrane passes run 1–21 (MLTL…THIV), 48–68 (FCAG…TMLV), 76–96 (LVAL…TALM), 99–119 (ILTF…VIFF), 134–154 (GIGL…VTPI), 175–195 (ALIG…VLLT), 196–216 (ATLT…VIGA), 240–260 (LGSL…VHLL), and 274–294 (LVIY…LPFV).

It belongs to the YjbB family.

The protein localises to the cell inner membrane. The enzyme catalyses phosphate(in) = phosphate(out). Functionally, might be involved in phosphate export. Overproduction of YjbB reduces the elevated levels of polyphosphate (polyP) in a phoU mutant that accumulates 1000-fold higher levels of polyP than the wild type, suggesting that YjbB exports excess intracellular phosphate (Pi) in the phoU mutant and thus reduces the levels of polyP. The protein is Putative inorganic phosphate export protein YjbB (yjbB) of Escherichia coli (strain K12).